The primary structure comprises 321 residues: Sporulation protein cse15 (321 aa).

Coiled coils occupy residues 37–70 (FHQKNNKLLKENTDMKEKLQQLSAELTHMSTKEK) and 108–205 (IEEK…KEKL). Basic and acidic residues-rich tracts occupy residues 234 to 243 (GTKQKEKTEE) and 282 to 293 (AKSHTIEELKNR). Disordered regions lie at residues 234–253 (GTKQKEKTEEEAPAAYAQPN) and 274–293 (AHAQSSDQAKSHTIEELKNR).

This Bacillus subtilis (strain 168) protein is Sporulation protein cse15 (cse15).